Consider the following 283-residue polypeptide: Pantothenate synthetase (283 aa).

26–33 (MGNLHEGH) contributes to the ATP binding site. The active-site Proton donor is the His33. Gln57 is a (R)-pantoate binding site. Residue Gln57 participates in beta-alanine binding. 144–147 (GKKD) serves as a coordination point for ATP. Gln150 is a binding site for (R)-pantoate. Residues Val173 and 181 to 184 (LSSR) contribute to the ATP site.

This sequence belongs to the pantothenate synthetase family. Homodimer.

The protein localises to the cytoplasm. The catalysed reaction is (R)-pantoate + beta-alanine + ATP = (R)-pantothenate + AMP + diphosphate + H(+). It functions in the pathway cofactor biosynthesis; (R)-pantothenate biosynthesis; (R)-pantothenate from (R)-pantoate and beta-alanine: step 1/1. Catalyzes the condensation of pantoate with beta-alanine in an ATP-dependent reaction via a pantoyl-adenylate intermediate. The polypeptide is Pantothenate synthetase (Ralstonia pickettii (strain 12J)).